The chain runs to 127 residues: Holo-[acyl-carrier-protein] synthase (127 aa).

Residues Asp9 and Glu58 each contribute to the Mg(2+) site.

Belongs to the P-Pant transferase superfamily. AcpS family. Mg(2+) serves as cofactor.

The protein localises to the cytoplasm. It catalyses the reaction apo-[ACP] + CoA = holo-[ACP] + adenosine 3',5'-bisphosphate + H(+). Functionally, transfers the 4'-phosphopantetheine moiety from coenzyme A to a Ser of acyl-carrier-protein. This Shewanella baltica (strain OS185) protein is Holo-[acyl-carrier-protein] synthase.